A 346-amino-acid chain; its full sequence is Beta-hexosaminidase (346 aa).

Substrate contacts are provided by residues Asp62, Arg70, Arg134, and 164–165; that span reads KH. The active-site Proton donor/acceptor is the His177. Asp249 (nucleophile) is an active-site residue.

This sequence belongs to the glycosyl hydrolase 3 family. NagZ subfamily.

The protein localises to the cytoplasm. The catalysed reaction is Hydrolysis of terminal non-reducing N-acetyl-D-hexosamine residues in N-acetyl-beta-D-hexosaminides.. It participates in cell wall biogenesis; peptidoglycan recycling. Plays a role in peptidoglycan recycling by cleaving the terminal beta-1,4-linked N-acetylglucosamine (GlcNAc) from peptide-linked peptidoglycan fragments, giving rise to free GlcNAc, anhydro-N-acetylmuramic acid and anhydro-N-acetylmuramic acid-linked peptides. In Actinobacillus succinogenes (strain ATCC 55618 / DSM 22257 / CCUG 43843 / 130Z), this protein is Beta-hexosaminidase.